Here is a 362-residue protein sequence, read N- to C-terminus: MNTFGTRLKFTSFGESHGVAVGCIIDGMPAGVKFDEEFLQNELDKRKGGSKFATPRKESDKAQVLSGVFEGYTTGHPIAIVVFNENAHSKDYDNLKDLFRPAHADFTYFYKYGIRDHRGGGRSSARESVARVAGGAVAAMLLCEFGICVQSGVFGIGTFVSNLKEEEFDFEFAKKSEIFCLDPKLESDFKNEILNARNSKDSVGAAVFTKVSGMLVGLGEVLYDKLDSKLAHALMGVNAVKAVEIGEGINASKMRGSCNNDALKDGKFLSNHSGGILGGISNGENLILKTYFKPTPSIFAKQESIDKFGNNLEFELKGRHDPCVGVRGSVVANAMVRLVLADCLLLNASANLNNLKNAYGLK.

Arginine 46 contributes to the NADP(+) binding site. Residues 122 to 124 (RSS), 238 to 239 (NA), glycine 278, 293 to 297 (KPTPS), and arginine 319 contribute to the FMN site.

This sequence belongs to the chorismate synthase family. As to quaternary structure, homotetramer. The cofactor is FMNH2.

It carries out the reaction 5-O-(1-carboxyvinyl)-3-phosphoshikimate = chorismate + phosphate. It participates in metabolic intermediate biosynthesis; chorismate biosynthesis; chorismate from D-erythrose 4-phosphate and phosphoenolpyruvate: step 7/7. Catalyzes the anti-1,4-elimination of the C-3 phosphate and the C-6 proR hydrogen from 5-enolpyruvylshikimate-3-phosphate (EPSP) to yield chorismate, which is the branch point compound that serves as the starting substrate for the three terminal pathways of aromatic amino acid biosynthesis. This reaction introduces a second double bond into the aromatic ring system. The protein is Chorismate synthase of Campylobacter jejuni subsp. jejuni serotype O:23/36 (strain 81-176).